We begin with the raw amino-acid sequence, 311 residues long: tRNA-cytidine(32) 2-sulfurtransferase (311 aa).

Positions 47 to 52 (SGGKDS) match the PP-loop motif motif. 3 residues coordinate [4Fe-4S] cluster: Cys122, Cys125, and Cys213.

It belongs to the TtcA family. Homodimer. The cofactor is Mg(2+). [4Fe-4S] cluster serves as cofactor.

It localises to the cytoplasm. The enzyme catalyses cytidine(32) in tRNA + S-sulfanyl-L-cysteinyl-[cysteine desulfurase] + AH2 + ATP = 2-thiocytidine(32) in tRNA + L-cysteinyl-[cysteine desulfurase] + A + AMP + diphosphate + H(+). Its pathway is tRNA modification. Functionally, catalyzes the ATP-dependent 2-thiolation of cytidine in position 32 of tRNA, to form 2-thiocytidine (s(2)C32). The sulfur atoms are provided by the cysteine/cysteine desulfurase (IscS) system. This Salmonella paratyphi B (strain ATCC BAA-1250 / SPB7) protein is tRNA-cytidine(32) 2-sulfurtransferase.